Here is a 212-residue protein sequence, read N- to C-terminus: Major fimbrial subunit (212 aa).

The first 18 residues, 1–18 (MKKTLLGSLILLAFATNA), serve as a signal peptide directing secretion. Cys42 and Cys82 are oxidised to a cystine.

Belongs to the fimbrial protein family.

It is found in the fimbrium. Mediates adherence to oropharyngeal epithelial cells. Helps the airway colonization process. This chain is Major fimbrial subunit (hifA), found in Haemophilus influenzae.